Here is a 146-residue protein sequence, read N- to C-terminus: 3-dehydroquinate dehydratase (146 aa).

Residue Tyr24 is the Proton acceptor of the active site. Substrate is bound by residues Asn73, His79, and Asp86. His99 serves as the catalytic Proton donor. Residues 100-101 (LS) and Arg110 contribute to the substrate site.

The protein belongs to the type-II 3-dehydroquinase family. As to quaternary structure, homododecamer.

It catalyses the reaction 3-dehydroquinate = 3-dehydroshikimate + H2O. It functions in the pathway metabolic intermediate biosynthesis; chorismate biosynthesis; chorismate from D-erythrose 4-phosphate and phosphoenolpyruvate: step 3/7. Functionally, catalyzes a trans-dehydration via an enolate intermediate. The protein is 3-dehydroquinate dehydratase of Shewanella baltica (strain OS185).